Consider the following 1100-residue polypeptide: Beta-alanine-activating enzyme (1100 aa).

The interval 162 to 181 (HKVTDREDRVSAESRTPEKE) is disordered. Residues 197–205 (TSGTTGTPK), Asp-427, Arg-441, and Lys-526 each bind ATP. The Carrier domain occupies 552–632 (EELWGKLQYL…DVYNHIVQAV (81 aa)). At Ser-591 the chain carries O-(pantetheine 4'-phosphoryl)serine. The interval 643–671 (SYTTKRKFSDADPEEASGKPARLESAWPS) is disordered. Ser-651 is subject to Phosphoserine.

Belongs to the ATP-dependent AMP-binding enzyme family.

Its function is as follows. Covalently binds beta-alanine in an ATP-dependent manner to form a thioester bond with its phosphopantetheine group and transfers it to an as yet unknown acceptor via an amide bond. May be required for a post-translational protein modification or for post-transcriptional modification of an RNA. The chain is Beta-alanine-activating enzyme (Aasdh) from Mus musculus (Mouse).